We begin with the raw amino-acid sequence, 153 residues long: MADTERTFVMVKPDGVQRGLIGDIVSRFEDRGLKLVAGKFMQIDDELAREHYAEHVDKPFFDELKEFITSGPVFAMVWEGQDAVAQVRTMMGETDPAESAPGTIRGDFGLDLGRNVIHGSDTEPGSAEREIGLFFDDDELQDYERIDEPWLYE.

Positions 12, 60, 88, 94, 105, and 115 each coordinate ATP. The Pros-phosphohistidine intermediate role is filled by His-118.

This sequence belongs to the NDK family. Mg(2+) serves as cofactor.

It is found in the cytoplasm. It carries out the reaction a 2'-deoxyribonucleoside 5'-diphosphate + ATP = a 2'-deoxyribonucleoside 5'-triphosphate + ADP. The catalysed reaction is a ribonucleoside 5'-diphosphate + ATP = a ribonucleoside 5'-triphosphate + ADP. Its function is as follows. Major role in the synthesis of nucleoside triphosphates other than ATP. The ATP gamma phosphate is transferred to the NDP beta phosphate via a ping-pong mechanism, using a phosphorylated active-site intermediate. The polypeptide is Nucleoside diphosphate kinase (Natronomonas pharaonis (strain ATCC 35678 / DSM 2160 / CIP 103997 / JCM 8858 / NBRC 14720 / NCIMB 2260 / Gabara) (Halobacterium pharaonis)).